We begin with the raw amino-acid sequence, 237 residues long: Phosphoribosylaminoimidazole-succinocarboxamide synthase (237 aa).

It belongs to the SAICAR synthetase family.

The catalysed reaction is 5-amino-1-(5-phospho-D-ribosyl)imidazole-4-carboxylate + L-aspartate + ATP = (2S)-2-[5-amino-1-(5-phospho-beta-D-ribosyl)imidazole-4-carboxamido]succinate + ADP + phosphate + 2 H(+). It functions in the pathway purine metabolism; IMP biosynthesis via de novo pathway; 5-amino-1-(5-phospho-D-ribosyl)imidazole-4-carboxamide from 5-amino-1-(5-phospho-D-ribosyl)imidazole-4-carboxylate: step 1/2. In Shigella boydii serotype 4 (strain Sb227), this protein is Phosphoribosylaminoimidazole-succinocarboxamide synthase.